The sequence spans 450 residues: Tubulin alpha-5 chain (450 aa).

GTP is bound by residues glutamine 11, glutamate 71, glycine 144, threonine 145, threonine 179, asparagine 206, and asparagine 228. Residue glutamate 71 participates in Mg(2+) binding. Residue glutamate 254 is part of the active site.

Belongs to the tubulin family. As to quaternary structure, dimer of alpha and beta chains. A typical microtubule is a hollow water-filled tube with an outer diameter of 25 nm and an inner diameter of 15 nM. Alpha-beta heterodimers associate head-to-tail to form protofilaments running lengthwise along the microtubule wall with the beta-tubulin subunit facing the microtubule plus end conferring a structural polarity. Microtubules usually have 13 protofilaments but different protofilament numbers can be found in some organisms and specialized cells. Mg(2+) is required as a cofactor. Undergoes a tyrosination/detyrosination cycle, the cyclic removal and re-addition of a C-terminal tyrosine residue by the enzymes tubulin tyrosine carboxypeptidase (TTCP) and tubulin tyrosine ligase (TTL), respectively.

Its subcellular location is the cytoplasm. It localises to the cytoskeleton. It carries out the reaction GTP + H2O = GDP + phosphate + H(+). Its function is as follows. Tubulin is the major constituent of microtubules, a cylinder consisting of laterally associated linear protofilaments composed of alpha- and beta-tubulin heterodimers. Microtubules grow by the addition of GTP-tubulin dimers to the microtubule end, where a stabilizing cap forms. Below the cap, tubulin dimers are in GDP-bound state, owing to GTPase activity of alpha-tubulin. The chain is Tubulin alpha-5 chain (TUBA5) from Zea mays (Maize).